The sequence spans 525 residues: GMP synthase [glutamine-hydrolyzing] (525 aa).

Residues 9–207 (RILILDFGSQ…ILDICECEAL (199 aa)) enclose the Glutamine amidotransferase type-1 domain. The active-site Nucleophile is cysteine 86. Active-site residues include histidine 181 and glutamate 183. The region spanning 208–400 (WTPSKIAEDA…LGLPYDMVYR (193 aa)) is the GMPS ATP-PPase domain. ATP is bound at residue 235–241 (SGGVDSS).

In terms of assembly, homodimer.

It carries out the reaction XMP + L-glutamine + ATP + H2O = GMP + L-glutamate + AMP + diphosphate + 2 H(+). It functions in the pathway purine metabolism; GMP biosynthesis; GMP from XMP (L-Gln route): step 1/1. Catalyzes the synthesis of GMP from XMP. The sequence is that of GMP synthase [glutamine-hydrolyzing] from Pseudomonas fluorescens (strain SBW25).